We begin with the raw amino-acid sequence, 279 residues long: Coiled-coil domain-containing protein 106 (279 aa).

The stretch at 62–101 forms a coiled coil; it reads KAQLHMALERNSWLQKRIEDLEEERDFLRCQLDKFISSAR. Over residues 109-121 the composition is skewed to basic and acidic residues; it reads RMKPGPRRVDGDS. The disordered stretch occupies residues 109–173; sequence RMKPGPRRVD…FGKTKARERQ (65 aa). Serine 129 carries the phosphoserine modification. Residues 151–164 carry the Bipartite nuclear localization signal motif; that stretch reads KRQKQKGSTSRKRF. Basic residues predominate over residues 151–167; it reads KRQKQKGSTSRKRFGKT.

Interacts with p53/TP53.

The protein localises to the nucleus. In terms of biological role, promotes the degradation of p53/TP53 protein and inhibits its transactivity. In Mus musculus (Mouse), this protein is Coiled-coil domain-containing protein 106 (Ccdc106).